The following is a 253-amino-acid chain: Prepilin leader peptidase/N-methyltransferase (253 aa).

A helical membrane pass occupies residues 4–24 (VYLILFSIVSLILGSFSNVVI). Zn(2+) is bound by residues cysteine 48, cysteine 51, cysteine 73, and cysteine 76. The next 6 helical transmembrane spans lie at 80-100 (ISLS…PIYW), 106-126 (VDSF…VIDF), 129-149 (MLLP…YVQQ), 159-179 (IIGG…VRLF), 198-218 (TLIG…IAFI), and 230-250 (CLYI…FFSI).

This sequence belongs to the peptidase A24 family. The cofactor is Zn(2+).

It localises to the cell inner membrane. The enzyme catalyses Typically cleaves a -Gly-|-Phe- bond to release an N-terminal, basic peptide of 5-8 residues from type IV prepilin, and then N-methylates the new N-terminal amino group, the methyl donor being S-adenosyl-L-methionine.. Functionally, plays an essential role in type IV pili and type II pseudopili formation by proteolytically removing the leader sequence from substrate proteins and subsequently monomethylating the alpha-amino group of the newly exposed N-terminal phenylalanine. The protein is Prepilin leader peptidase/N-methyltransferase (tcpJ) of Vibrio cholerae serotype O1 (strain ATCC 39315 / El Tor Inaba N16961).